The primary structure comprises 381 residues: ATP-dependent (S)-NAD(P)H-hydrate dehydratase (381 aa).

The YjeF C-terminal domain maps to alanine 84–isoleucine 376. (6S)-NADPHX-binding positions include glycine 197 and asparagine 250–arginine 256. ATP-binding positions include lysine 290–aspartate 294 and glycine 309–glycine 318. Aspartate 319 provides a ligand contact to (6S)-NADPHX.

Belongs to the NnrD/CARKD family. Mg(2+) serves as cofactor.

The catalysed reaction is (6S)-NADHX + ATP = ADP + phosphate + NADH + H(+). It carries out the reaction (6S)-NADPHX + ATP = ADP + phosphate + NADPH + H(+). In terms of biological role, catalyzes the dehydration of the S-form of NAD(P)HX at the expense of ATP, which is converted to ADP. Together with NAD(P)HX epimerase, which catalyzes the epimerization of the S- and R-forms, the enzyme allows the repair of both epimers of NAD(P)HX, a damaged form of NAD(P)H that is a result of enzymatic or heat-dependent hydration. The polypeptide is ATP-dependent (S)-NAD(P)H-hydrate dehydratase (Sorghum bicolor (Sorghum)).